Consider the following 268-residue polypeptide: Tryptophan synthase alpha chain (268 aa).

Active-site proton acceptor residues include glutamate 49 and aspartate 60.

Belongs to the TrpA family. Tetramer of two alpha and two beta chains.

The enzyme catalyses (1S,2R)-1-C-(indol-3-yl)glycerol 3-phosphate + L-serine = D-glyceraldehyde 3-phosphate + L-tryptophan + H2O. Its pathway is amino-acid biosynthesis; L-tryptophan biosynthesis; L-tryptophan from chorismate: step 5/5. In terms of biological role, the alpha subunit is responsible for the aldol cleavage of indoleglycerol phosphate to indole and glyceraldehyde 3-phosphate. The sequence is that of Tryptophan synthase alpha chain from Pseudomonas aeruginosa (strain LESB58).